Reading from the N-terminus, the 450-residue chain is tRNA modification GTPase MnmE (450 aa).

(6S)-5-formyl-5,6,7,8-tetrahydrofolate is bound by residues Arg-20, Glu-78, and Lys-117. Positions 211-372 (GLRMVIVGKP…LEESIYRETQ (162 aa)) constitute a TrmE-type G domain. Asn-221 provides a ligand contact to K(+). GTP is bound by residues 221-226 (NVGKST), 240-246 (TDIPGTT), 265-268 (DTAG), 326-329 (NKVD), and 353-355 (SAL). Ser-225 serves as a coordination point for Mg(2+). 3 residues coordinate K(+): Thr-240, Ile-242, and Thr-245. Thr-246 contacts Mg(2+). A (6S)-5-formyl-5,6,7,8-tetrahydrofolate-binding site is contributed by Lys-450.

The protein belongs to the TRAFAC class TrmE-Era-EngA-EngB-Septin-like GTPase superfamily. TrmE GTPase family. As to quaternary structure, homodimer. Heterotetramer of two MnmE and two MnmG subunits. It depends on K(+) as a cofactor.

It localises to the cytoplasm. Exhibits a very high intrinsic GTPase hydrolysis rate. Involved in the addition of a carboxymethylaminomethyl (cmnm) group at the wobble position (U34) of certain tRNAs, forming tRNA-cmnm(5)s(2)U34. The chain is tRNA modification GTPase MnmE from Thermotoga maritima (strain ATCC 43589 / DSM 3109 / JCM 10099 / NBRC 100826 / MSB8).